The following is a 163-amino-acid chain: Nucleotide-binding protein ROP_16630 (163 aa).

The protein belongs to the YajQ family.

Nucleotide-binding protein. This chain is Nucleotide-binding protein ROP_16630, found in Rhodococcus opacus (strain B4).